The sequence spans 208 residues: Uracil phosphoribosyltransferase (208 aa).

5-phospho-alpha-D-ribose 1-diphosphate is bound by residues Arg-77, Arg-102, and 128-136 (DPMLATGGT). Residues Ile-191 and 196 to 198 (GDI) each bind uracil. Asp-197 contacts 5-phospho-alpha-D-ribose 1-diphosphate.

It belongs to the UPRTase family. Mg(2+) is required as a cofactor.

It catalyses the reaction UMP + diphosphate = 5-phospho-alpha-D-ribose 1-diphosphate + uracil. The protein operates within pyrimidine metabolism; UMP biosynthesis via salvage pathway; UMP from uracil: step 1/1. Its activity is regulated as follows. Allosterically activated by GTP. In terms of biological role, catalyzes the conversion of uracil and 5-phospho-alpha-D-ribose 1-diphosphate (PRPP) to UMP and diphosphate. This is Uracil phosphoribosyltransferase from Aquifex aeolicus (strain VF5).